Consider the following 177-residue polypeptide: ADP-ribose 1''-phosphate phosphatase (177 aa).

The Macro domain maps to Met-1–Leu-177. Residues Gly-9–Ile-11, Ser-24–Asn-26, Trp-31–Ala-36, and Ile-147–Gly-153 contribute to the substrate site.

Belongs to the POA1 family.

It catalyses the reaction ADP-alpha-D-ribose 1''-phosphate + H2O = ADP-D-ribose + phosphate. Its function is as follows. Highly specific phosphatase involved in the metabolism of ADP-ribose 1''-phosphate (Appr1p) which is produced as a consequence of tRNA splicing. Removes ADP-ribose from glutamate residues in proteins bearing a single ADP-ribose moiety. Inactive towards proteins bearing poly-ADP-ribose. This chain is ADP-ribose 1''-phosphate phosphatase (POA1), found in Saccharomyces cerevisiae (strain YJM789) (Baker's yeast).